The chain runs to 357 residues: UDP-N-acetylglucosamine--N-acetylmuramyl-(pentapeptide) pyrophosphoryl-undecaprenol N-acetylglucosamine transferase (357 aa).

UDP-N-acetyl-alpha-D-glucosamine-binding positions include 11 to 13 (TGG), Asn-120, Arg-161, Ser-188, and Gln-281.

This sequence belongs to the glycosyltransferase 28 family. MurG subfamily.

The protein localises to the cell inner membrane. It catalyses the reaction di-trans,octa-cis-undecaprenyl diphospho-N-acetyl-alpha-D-muramoyl-L-alanyl-D-glutamyl-meso-2,6-diaminopimeloyl-D-alanyl-D-alanine + UDP-N-acetyl-alpha-D-glucosamine = di-trans,octa-cis-undecaprenyl diphospho-[N-acetyl-alpha-D-glucosaminyl-(1-&gt;4)]-N-acetyl-alpha-D-muramoyl-L-alanyl-D-glutamyl-meso-2,6-diaminopimeloyl-D-alanyl-D-alanine + UDP + H(+). It participates in cell wall biogenesis; peptidoglycan biosynthesis. Cell wall formation. Catalyzes the transfer of a GlcNAc subunit on undecaprenyl-pyrophosphoryl-MurNAc-pentapeptide (lipid intermediate I) to form undecaprenyl-pyrophosphoryl-MurNAc-(pentapeptide)GlcNAc (lipid intermediate II). The sequence is that of UDP-N-acetylglucosamine--N-acetylmuramyl-(pentapeptide) pyrophosphoryl-undecaprenol N-acetylglucosamine transferase from Prochlorococcus marinus (strain SARG / CCMP1375 / SS120).